Here is a 473-residue protein sequence, read N- to C-terminus: Adenosylhomocysteinase (473 aa).

Residues Thr-64, Asp-139, and Glu-199 each coordinate substrate. 200 to 202 (TTT) contributes to the NAD(+) binding site. Lys-229 and Asp-233 together coordinate substrate. Residues Asn-234, 263-268 (GYGDVG), Glu-286, Asn-321, 342-344 (IGH), and Asn-387 each bind NAD(+).

The protein belongs to the adenosylhomocysteinase family. NAD(+) is required as a cofactor.

The protein resides in the cytoplasm. The catalysed reaction is S-adenosyl-L-homocysteine + H2O = L-homocysteine + adenosine. It functions in the pathway amino-acid biosynthesis; L-homocysteine biosynthesis; L-homocysteine from S-adenosyl-L-homocysteine: step 1/1. Its function is as follows. May play a key role in the regulation of the intracellular concentration of adenosylhomocysteine. The sequence is that of Adenosylhomocysteinase from Burkholderia thailandensis (strain ATCC 700388 / DSM 13276 / CCUG 48851 / CIP 106301 / E264).